A 142-amino-acid chain; its full sequence is Hemoglobin subunit alpha (142 aa).

An N-acetylserine modification is found at Ser-1. The region spanning 1-142 is the Globin domain; it reads SLSDKDKAAV…LSLALAEKYR (142 aa). Heme b is bound by residues His-59 and His-88.

It belongs to the globin family. As to quaternary structure, heterotetramer of two alpha chains and two beta chains. Red blood cells.

Its function is as follows. Involved in oxygen transport from gills to the various peripheral tissues. The protein is Hemoglobin subunit alpha of Lycodes reticulatus (Arctic eelpout).